We begin with the raw amino-acid sequence, 120 residues long: Large ribosomal subunit protein bL20 (120 aa).

It belongs to the bacterial ribosomal protein bL20 family.

Its function is as follows. Binds directly to 23S ribosomal RNA and is necessary for the in vitro assembly process of the 50S ribosomal subunit. It is not involved in the protein synthesizing functions of that subunit. This is Large ribosomal subunit protein bL20 from Blochmanniella pennsylvanica (strain BPEN).